A 346-amino-acid chain; its full sequence is Fusaric acid resistance protein FusC (346 aa).

4 helical membrane passes run 10–30, 248–268, 291–311, and 315–335; these read VIIG…RYTG, VILA…VMLV, MGMG…GIYP, and GFVL…YMSL.

The protein belongs to the aromatic acid exporter ArAE (TC 2.A.85) family.

The protein resides in the cell membrane. Involved in the resistance (detoxification) of the fungal toxin fusaric acid. The polypeptide is Fusaric acid resistance protein FusC (fusC) (Burkholderia cepacia (Pseudomonas cepacia)).